Reading from the N-terminus, the 130-residue chain is uncharacterized protein (130 aa).

The disordered stretch occupies residues 23–130 (SHLRLLPTAN…GAHQLSSPSS (108 aa)). Positions 30–45 (TANSPSGSNQPTNPNR) are enriched in polar residues.

This is an uncharacterized protein from Homo sapiens (Human).